A 456-amino-acid chain; its full sequence is UPF0496 protein 4 (456 aa).

The helical transmembrane segment at 195 to 217 threads the bilayer; the sequence is VLMRALYGIESVTVFVCSIFVAV. The disordered stretch occupies residues 368-390; it reads QDSNVKQANGSSDESALVVPERT. Polar residues predominate over residues 371 to 381; the sequence is NVKQANGSSDE.

The protein belongs to the ROH1 family.

The protein localises to the membrane. This Oryza sativa subsp. japonica (Rice) protein is UPF0496 protein 4.